A 294-amino-acid chain; its full sequence is Serine/threonine-protein kinase Aurora-1 (294 aa).

Residues 31-282 (FDIGKPLGRG…LHKLLEHPWI (252 aa)) form the Protein kinase domain. ATP is bound by residues 37–45 (LGRGKFGHV) and lysine 60. The active-site Proton acceptor is aspartate 154. Residue serine 176 is modified to Phosphoserine. The residue at position 185 (threonine 185) is a Phosphothreonine.

It belongs to the protein kinase superfamily. Ser/Thr protein kinase family. Aurora subfamily. Interacts with TPX2. Phosphorylation at Thr-185 may regulate activity and degradation of AUR1 in a cell cycle dependent manner. Abundant in roots, flowers and flower buds, low or absent in expanded leaves, stems and siliques.

The protein localises to the nucleus membrane. Its subcellular location is the cytoplasm. The protein resides in the cytoskeleton. It localises to the spindle. It is found in the spindle pole. The protein localises to the phragmoplast. It carries out the reaction L-seryl-[protein] + ATP = O-phospho-L-seryl-[protein] + ADP + H(+). The catalysed reaction is L-threonyl-[protein] + ATP = O-phospho-L-threonyl-[protein] + ADP + H(+). In terms of biological role, phosphorylates specifically 'Ser-10' of histone H3 in vitro and colocalizes with phosphorylated histone H3 during mitosis. Associates with cytoskeletal structures that are necessary for cytokinesis and with the microtubule spindle. Also colocalizes with gamma-tubulin and function in microtubule organizing centers (MTOCs). In contrast with the mammalian B-type Aurora, AUR1 has no kinase activity toward 'Ser-28' of histone H3. The protein is Serine/threonine-protein kinase Aurora-1 (AUR1) of Arabidopsis thaliana (Mouse-ear cress).